Reading from the N-terminus, the 254-residue chain is Ribosomal RNA small subunit methyltransferase G (254 aa).

Residues 1–21 (MPEGDGVPRETPSPSVVPESP) are disordered. Residues 9-21 (RETPSPSVVPESP) show a composition bias toward low complexity. S-adenosyl-L-methionine contacts are provided by residues Gly90, Leu95, 142 to 143 (AE), and Arg157. The interval 230-254 (GPLRAATAPAPPGAAKRRPGKGNRR) is disordered. Positions 244 to 254 (AKRRPGKGNRR) are enriched in basic residues.

This sequence belongs to the methyltransferase superfamily. RNA methyltransferase RsmG family.

The protein localises to the cytoplasm. Specifically methylates the N7 position of guanine in position 518 of 16S rRNA. This is Ribosomal RNA small subunit methyltransferase G from Kineococcus radiotolerans (strain ATCC BAA-149 / DSM 14245 / SRS30216).